Reading from the N-terminus, the 267-residue chain is Alkaline ceramidase 3 (267 aa).

The Cytoplasmic portion of the chain corresponds to 1 to 33 (MAPAADREGYWGPTTSTLDWCEENYSVTWYIAE). Positions 19, 20, 22, 24, and 33 each coordinate Ca(2+). The chain crosses the membrane as a helical span at residues 34–55 (FWNTVSNLIMIIPPMFGAVQSV). Topologically, residues 56–61 (RDGLEK) are lumenal. Residues 62-82 (RYIASYLALTVVGMGSWCFHM) form a helical membrane-spanning segment. Histidine 81 provides a ligand contact to Zn(2+). At 83 to 87 (TLKYE) the chain is on the cytoplasmic side. Residues 88-108 (MQLLDELPMIYSCCIFVYCMF) form a helical membrane-spanning segment. At 109 to 118 (ECFKIKNSVN) the chain is on the lumenal side. Residues 119–139 (YHLLFTLVLFSLIVTTVYLKV) form a helical membrane-spanning segment. Residues 140 to 141 (KE) are Cytoplasmic-facing. The chain crosses the membrane as a helical span at residues 142 to 162 (PIFHQVMYGMLVFTLVLRSIY). At 163–173 (IVTWVYPWLRG) the chain is on the lumenal side. Residues 174-194 (LGYTSLGIFLLGFLFWNIDNI) traverse the membrane as a helical segment. The Cytoplasmic portion of the chain corresponds to 195–215 (FCESLRNFRKKVPPIIGITTQ). The helical transmembrane segment at 216 to 236 (FHAWWHILTGLGSYLHILFSL) threads the bilayer. 2 residues coordinate Zn(2+): histidine 217 and histidine 221. The Lumenal portion of the chain corresponds to 237 to 267 (YTRTLYLRYRPKVKFLFGIWPVILFEPLRKH).

It belongs to the alkaline ceramidase family. The cofactor is Zn(2+). Ubiquitously expressed. Highly expressed in placenta. Expressed in erythrocytes.

It is found in the endoplasmic reticulum membrane. Its subcellular location is the golgi apparatus membrane. The catalysed reaction is an N-acyl-(4R)-4-hydroxysphinganine + H2O = (4R)-hydroxysphinganine + a fatty acid. It carries out the reaction N-(5Z,8Z,11Z,14Z-eicosatetraenoyl)-sphing-4-enine + H2O = sphing-4-enine + (5Z,8Z,11Z,14Z)-eicosatetraenoate. The enzyme catalyses N-(5Z,8Z,11Z,14Z-eicosatetraenoyl)-sphinganine + H2O = sphinganine + (5Z,8Z,11Z,14Z)-eicosatetraenoate. It catalyses the reaction N-(5Z,8Z,11Z,14Z-eicosatetraenoyl)-(4R)-hydroxysphinganine + H2O = (4R)-hydroxysphinganine + (5Z,8Z,11Z,14Z)-eicosatetraenoate. The catalysed reaction is N-(11Z-eicosenoyl)-sphing-4-enine + H2O = (11Z)-eicosenoate + sphing-4-enine. It carries out the reaction N-(11Z-eicosenoyl)-sphinganine + H2O = (11Z)-eicosenoate + sphinganine. The enzyme catalyses N-(11Z-eicosenoyl)-(4R)-hydroxysphinganine + H2O = (11Z)-eicosenoate + (4R)-hydroxysphinganine. It catalyses the reaction N-(9Z-octadecenoyl)-sphing-4-enine + H2O = sphing-4-enine + (9Z)-octadecenoate. The catalysed reaction is N-(9Z-octadecenoyl)-sphinganine + H2O = sphinganine + (9Z)-octadecenoate. It carries out the reaction N-(9Z-octadecenoyl)-(4R)-hydroxysphinganine + H2O = (4R)-hydroxysphinganine + (9Z)-octadecenoate. The enzyme catalyses an N-acylsphing-4-enine + H2O = sphing-4-enine + a fatty acid. It catalyses the reaction an N-acylsphinganine + H2O = sphinganine + a fatty acid. The protein operates within lipid metabolism; sphingolipid metabolism. Activated by 5 mM Ca(2+) and inhibited by 5 mM Zn(2+). Its function is as follows. Endoplasmic reticulum and Golgi ceramidase that catalyzes the hydrolysis of unsaturated long-chain C18:1-, C20:1- and C20:4-ceramides, dihydroceramides and phytoceramides into sphingoid bases like sphingosine and free fatty acids at alkaline pH. Ceramides, sphingosine, and its phosphorylated form sphingosine-1-phosphate are bioactive lipids that mediate cellular signaling pathways regulating several biological processes including cell proliferation, apoptosis and differentiation. Controls the generation of sphingosine in erythrocytes, and thereby sphingosine-1-phosphate in plasma. Through the regulation of ceramides and sphingosine-1-phosphate homeostasis in the brain may play a role in neurons survival and function. By regulating the levels of pro-inflammatory ceramides in immune cells and tissues, may modulate the inflammatory response. This is Alkaline ceramidase 3 (ACER3) from Homo sapiens (Human).